The sequence spans 412 residues: Short-chain specific acyl-CoA dehydrogenase, mitochondrial (412 aa).

A mitochondrion-targeting transit peptide spans 1–24 (MAAALLARARGPLRRALGVRDWRR). Thr27 is modified (phosphothreonine). Lys51 is modified (N6-acetyllysine; alternate). Lys51 carries the post-translational modification N6-succinyllysine; alternate. Lys72 carries the post-translational modification N6-acetyllysine. At Lys129 the chain carries N6-acetyllysine; alternate. N6-succinyllysine; alternate is present on Lys129. FAD contacts are provided by residues 152-161 (FALSEPGNGS) and 185-187 (WIT). Position 161 (Ser161) interacts with substrate. N6-acetyllysine is present on Lys208. Residue Lys262 is modified to N6-acetyllysine; alternate. Lys262 is subject to N6-succinyllysine; alternate. 269–272 (DMGR) serves as a coordination point for substrate. Residue Lys292 is modified to N6-acetyllysine. Arg297 serves as a coordination point for FAD. Lys306 is modified (N6-acetyllysine; alternate). The residue at position 306 (Lys306) is an N6-succinyllysine; alternate. Residues Gln308 and 365-369 (QILGG) each bind FAD. The active-site Proton acceptor is the Glu392. Gly393 is a substrate binding site. Residue 394–396 (TSE) coordinates FAD.

This sequence belongs to the acyl-CoA dehydrogenase family. In terms of assembly, homotetramer. It depends on FAD as a cofactor.

The protein localises to the mitochondrion matrix. It catalyses the reaction a short-chain 2,3-saturated fatty acyl-CoA + oxidized [electron-transfer flavoprotein] + H(+) = a short-chain (2E)-enoyl-CoA + reduced [electron-transfer flavoprotein]. The catalysed reaction is butanoyl-CoA + oxidized [electron-transfer flavoprotein] + H(+) = (2E)-butenoyl-CoA + reduced [electron-transfer flavoprotein]. The enzyme catalyses pentanoyl-CoA + oxidized [electron-transfer flavoprotein] + H(+) = (2E)-pentenoyl-CoA + reduced [electron-transfer flavoprotein]. It carries out the reaction hexanoyl-CoA + oxidized [electron-transfer flavoprotein] + H(+) = (2E)-hexenoyl-CoA + reduced [electron-transfer flavoprotein]. It participates in lipid metabolism; mitochondrial fatty acid beta-oxidation. In terms of biological role, short-chain specific acyl-CoA dehydrogenase is one of the acyl-CoA dehydrogenases that catalyze the first step of mitochondrial fatty acid beta-oxidation, an aerobic process breaking down fatty acids into acetyl-CoA and allowing the production of energy from fats. The first step of fatty acid beta-oxidation consists in the removal of one hydrogen from C-2 and C-3 of the straight-chain fatty acyl-CoA thioester, resulting in the formation of trans-2-enoyl-CoA. Among the different mitochondrial acyl-CoA dehydrogenases, short-chain specific acyl-CoA dehydrogenase acts specifically on acyl-CoAs with saturated 4 to 6 carbons long primary chains. The protein is Short-chain specific acyl-CoA dehydrogenase, mitochondrial (Acads) of Mus musculus (Mouse).